Reading from the N-terminus, the 192-residue chain is uncharacterized protein (192 aa).

The next 2 helical transmembrane spans lie at Ile31 to Glu51 and Val119 to Ile139.

Its subcellular location is the cell membrane. This is an uncharacterized protein from Thermotoga maritima (strain ATCC 43589 / DSM 3109 / JCM 10099 / NBRC 100826 / MSB8).